The following is a 321-amino-acid chain: Glucokinase (321 aa).

8–13 contacts ATP; sequence GDVGGT.

The protein belongs to the bacterial glucokinase family.

It localises to the cytoplasm. The enzyme catalyses D-glucose + ATP = D-glucose 6-phosphate + ADP + H(+). This is Glucokinase from Salmonella paratyphi B (strain ATCC BAA-1250 / SPB7).